The following is a 662-amino-acid chain: UPF0313 protein CPR_1216 (662 aa).

In terms of domain architecture, Radical SAM core spans 296–567 (AIEEVKFSLV…AMQRALLQFK (272 aa)). C310, C314, and C317 together coordinate [4Fe-4S] cluster. The tract at residues 597 to 662 (RDKNSFGKGN…QRVSKGKKRR (66 aa)) is disordered. The span at 618 to 632 (SRNENSGRRESEDKK) shows a compositional bias: basic and acidic residues. Residues 633–644 (RSSHSKKQRGNK) show a composition bias toward basic residues.

This sequence belongs to the UPF0313 family. The cofactor is [4Fe-4S] cluster.

This is UPF0313 protein CPR_1216 from Clostridium perfringens (strain SM101 / Type A).